A 312-amino-acid polypeptide reads, in one-letter code: Methionyl-tRNA formyltransferase (312 aa).

S109 to P112 is a binding site for (6S)-5,6,7,8-tetrahydrofolate.

It belongs to the Fmt family.

The enzyme catalyses L-methionyl-tRNA(fMet) + (6R)-10-formyltetrahydrofolate = N-formyl-L-methionyl-tRNA(fMet) + (6S)-5,6,7,8-tetrahydrofolate + H(+). Its function is as follows. Attaches a formyl group to the free amino group of methionyl-tRNA(fMet). The formyl group appears to play a dual role in the initiator identity of N-formylmethionyl-tRNA by promoting its recognition by IF2 and preventing the misappropriation of this tRNA by the elongation apparatus. This chain is Methionyl-tRNA formyltransferase, found in Listeria innocua serovar 6a (strain ATCC BAA-680 / CLIP 11262).